A 530-amino-acid chain; its full sequence is MSSIGGLRPAAGEQPGVGPHLQAVGGALLLCGLAVLLDWVWLQRQRAGGIPPGPKPRPLVGNFGYLLLPRFLRLHFWLGSGSQTDTVGRHVYLARLARVYGNIFSFFIGHRLVVVLSDFQSVREALVQQAEVFSDRPRMPLISILTKEKGIVFAHYGPIWKQQRRFSHSTLRHFGLGKLSLEPRIIEEFAYVKAEMQKHGEAPFSPFPVISNAVSNIICSLCFGQRFDYTNKEFKKVLDFMSRGLEICLHSQLFLINLCPWFYYLPFGPFKELRQIERDITCFLKNIIKEHQESLDANNPQDFIDMYLLHTQEEKDKCKGTNFDEDYLFYIIGDLFIAGTDTTTNSLLWCLLYMSLNPGVQKKVHEEIERVIGRDRAPSLTDKAQMPYTEATIMEVQRLSMVVPLAIPHMTSEKTVLQGYSIPKGTVVLPNLWSIHRDPVIWEKPDDFCPHRFLDDQGQLLKRETFIPFGIGKRVCMGEQLAKMELFLMFVSLMQSFTFALPEGSEKPIMTGRFGLTLAPHPFNVTVSKR.

4 helical membrane passes run 21 to 41 (LQAVGGALLLCGLAVLLDWVW), 99 to 119 (VYGNIFSFFIGHRLVVVLSDF), 247 to 267 (ICLHSQLFLINLCPWFYYLPF), and 328 to 348 (LFYIIGDLFIAGTDTTTNSLL). A heme-binding site is contributed by C476. A helical transmembrane segment spans residues 481 to 501 (LAKMELFLMFVSLMQSFTFAL).

Belongs to the cytochrome P450 family. Heme is required as a cofactor. In terms of tissue distribution, specifically expressed in thymus and brain. In brain, expressed in cortex, cerebellum, olfactory bulbs, pons and medulla and the limbic structures (at protein level).

The protein resides in the endoplasmic reticulum membrane. The protein localises to the microsome membrane. It localises to the mitochondrion inner membrane. It catalyses the reaction an omega-methyl-long-chain fatty acid + reduced [NADPH--hemoprotein reductase] + O2 = an omega-hydroxy-long-chain fatty acid + oxidized [NADPH--hemoprotein reductase] + H2O + H(+). The catalysed reaction is (5Z,8Z,11Z,14Z)-eicosatetraenoate + reduced [NADPH--hemoprotein reductase] + O2 = 19-hydroxy-(5Z,8Z,11Z,14Z)-eicosatetraenoate + oxidized [NADPH--hemoprotein reductase] + H2O + H(+). It carries out the reaction (5Z,8Z,11Z,14Z)-eicosatetraenoate + reduced [NADPH--hemoprotein reductase] + O2 = 20-hydroxy-(5Z,8Z,11Z,14Z)-eicosatetraenoate + oxidized [NADPH--hemoprotein reductase] + H2O + H(+). The enzyme catalyses N-[(5Z,8Z,11Z,14Z)-eicosatetraenoyl]-serotonin + reduced [NADPH--hemoprotein reductase] + O2 = 2-oxo-N-[(5Z,8Z,11Z,14Z)-eicosatetraenoyl]-serotonin + oxidized [NADPH--hemoprotein reductase] + H2O + H(+). Its function is as follows. A cytochrome P450 monooxygenase involved in the metabolism of arachidonic acid and its conjugates. Mechanistically, uses molecular oxygen inserting one oxygen atom into a substrate, and reducing the second into a water molecule, with two electrons provided by NADPH via cytochrome P450 reductase (CPR; NADPH-ferrihemoprotein reductase). Acts as an omega and omega-1 hydroxylase for arachidonic acid and possibly for other long chain fatty acids. May modulate the arachidonic acid signaling pathway and play a role in other fatty acid signaling processes. May down-regulate the biological activities of N-arachidonoyl-serotonin, an endocannabinoid that has anti-nociceptive effects through inhibition of fatty acid amide hydrolase FAAH, TRPV1 receptor and T-type calcium channels. Catalyzes C-2 oxidation of the indole ring of N-arachidonoyl-serotonin forming a less active product 2-oxo-N-arachidonoyl-serotonin. The chain is Cytochrome P450 2U1 (Cyp2u1) from Rattus norvegicus (Rat).